Reading from the N-terminus, the 250-residue chain is Aminoglycoside 3'-phosphotransferase (250 aa).

Asp-178 functions as the Proton acceptor in the catalytic mechanism.

The protein belongs to the aminoglycoside phosphotransferase family.

The enzyme catalyses kanamycin A + ATP = kanamycin 3'-phosphate + ADP + H(+). Resistance to kanamycin and structurally-related aminoglycosides, including amikacin. This Campylobacter jejuni protein is Aminoglycoside 3'-phosphotransferase (aphA-7).